The following is a 952-amino-acid chain: Ent-kaur-16-ene synthase (952 aa).

Residues Asp-668, Glu-672, Asn-848, Asp-849, Ser-852, and Asp-856 each contribute to the Mg(2+) site. Positions 668 to 672 match the DEXXE motif motif; that stretch reads DEYME.

Belongs to the terpene synthase family. The cofactor is Mg(2+).

It catalyses the reaction ent-copalyl diphosphate = ent-kaur-16-ene + diphosphate. The catalysed reaction is (2E,6E,10E)-geranylgeranyl diphosphate = ent-copalyl diphosphate. It functions in the pathway plant hormone biosynthesis; gibberellin biosynthesis. Its function is as follows. Catalyzes the conversion of geranylgeranyl diphosphate to the gibberellin precursor ent-kaurene diphosphate in a two step process. The protein is Ent-kaur-16-ene synthase (cps) of Fusarium fujikuroi (Bakanae and foot rot disease fungus).